The chain runs to 186 residues: ADP-ribosylation factor-like protein 8B (186 aa).

An N-acetylmethionine modification is found at M1. An intramembrane region (note=Mediates targeting to membranes) is located at residues 1 to 19 (MLALISRLLDWFRSLFWKE). Residues 29–35 (QYSGKTT), 71–75 (DIGGQ), and 130–133 (NKRD) contribute to the GTP site. K141 participates in a covalent cross-link: Glycyl lysine isopeptide (Lys-Gly) (interchain with G-Cter in ubiquitin).

The protein belongs to the small GTPase superfamily. Arf family. As to quaternary structure, interacts with tubulin. Interacts with BORCS5; recruits ARL8B to lysosomes. Interacts with VPS41; the interaction mediates the recruitment of the HOPS complex to lysosomes. Interacts (GTP-bound form) with PLEKHM2 (via RUN domain); the interaction is required to recruit the motor protein kinesin-1 on lysosomes. Interacts (GTP-bound form) with PLEKHM1 (via RUN domain); the interaction is required for PLEKHM1 localization to lysosomes and for ARL8B function in delivery and degradation of endocytic and autophagic cargo in lysosomes. PLEKHM1 and PLEKHM2 compete for interaction with ARL8B. Interacts (GTP-bound form) with RUFY1; the interaction is required for RUFY1 endosomal location. When GTP-bound, interacts with RUFY3 and RUFY4, but not with RUFY1, nor RUFY2. Post-translationally, ubiquitinated at Lys-141 by RNF167, leading to its degradation. Ubiquitously expressed.

It is found in the late endosome membrane. The protein localises to the lysosome membrane. The protein resides in the cytoplasm. It localises to the cytoskeleton. Its subcellular location is the spindle. It is found in the cell projection. The protein localises to the axon. The protein resides in the synapse. It localises to the cytolytic granule membrane. Its subcellular location is the early endosome membrane. It carries out the reaction GTP + H2O = GDP + phosphate + H(+). Small GTPase which cycles between active GTP-bound and inactive GDP-bound states. In its active state, binds to a variety of effector proteins playing a key role in the regulation of lysosomal positioning which is important for nutrient sensing, natural killer cell-mediated cytotoxicity and antigen presentation. Along with its effectors, orchestrates lysosomal transport and fusion. Localizes specifically to lysosomal membranes and mediates anterograde lysosomal motility by recruiting PLEKHM2, which in turn recruits the motor protein kinesin-1 on lysosomes. Required for lysosomal and cytolytic granule exocytosis. Critical factor involved in NK cell-mediated cytotoxicity. Drives the polarization of cytolytic granules and microtubule-organizing centers (MTOCs) toward the immune synapse between effector NK lymphocytes and target cells. In neurons, mediates the anterograde axonal long-range transport of presynaptic lysosome-related vesicles required for presynaptic biogenesis and synaptic function. Also acts as a regulator of endosome to lysosome trafficking pathways of special significance for host defense. Recruits RUFY1 onto early endosomes regulating endosomes to trans-Golgi network proteins retrieval. Regulates cargo trafficking to lysosomes by binding to PLEKHM1 and recruiting the HOPS subunit VPS41, resulting in functional assembly of the HOPS complex on lysosomal membranes. Plays an important role in cargo delivery to lysosomes for antigen presentation and microbial killing. Directs the intersection of CD1d with lipid antigens in lysosomes, and plays a role in intersecting phagosomes with lysosomes to generate phagolysosomes that kill microbes. Involved in the process of MHC II presentation. Regulates the delivery of antigens to lysosomes and the formation of MHC II-peptide complexes through the recruitment of the HOPS complex to lysosomes allowing the fusion of late endosomes to lysosomes. May play a role in chromosome segregation. Functionally, (Microbial infection) During Mycobacterium tuberculosis (Mtb) infection, is required for plasma membrane repair by controlling the exocytosis of lysosomes in macrophages. ARL8B secretion pathway is crucial to control the type of cell death of the M.tuberculosis-infected macrophages, distinguishing avirulent from virulent Mtb induced necrotic cell death. In terms of biological role, (Microbial infection) During infection, coronaviruses such as SARS-CoV-2 and the chaperone HSPA5/GRP78 are probably co-released through ARL8B-dependent lysosomal exocytic pathway for unconventional egress. This is ADP-ribosylation factor-like protein 8B from Homo sapiens (Human).